The following is a 319-amino-acid chain: N-acyl-aromatic-L-amino acid amidohydrolase (carboxylate-forming) (319 aa).

The tract at residues 1–210 is hydrolytic domain; sequence MCSLPVPREP…TVLDFIELFN (210 aa). Residues histidine 21 and glutamate 24 each contribute to the Zn(2+) site. Substrate-binding positions include arginine 63 and 70 to 71; that span reads NR. Residue histidine 116 participates in Zn(2+) binding. Residues glutamate 178 and tyrosine 288 each contribute to the substrate site. A shielding domain region spans residues 211–318; it reads QGTAFPAFEM…PALTPAPSPA (108 aa).

This sequence belongs to the AspA/AstE family. Aspartoacylase subfamily. In terms of assembly, exists as a mixture of homodimers and homotetramer, both catalytically active. (Microbial infection) Interacts with hepatitis C virus/HCV core protein. Requires Zn(2+) as cofactor.

The protein resides in the apical cell membrane. It localises to the cytoplasm. The enzyme catalyses an N-acyl-aromatic L-alpha-amino acid + H2O = an aromatic L-alpha-amino acid + a carboxylate. It catalyses the reaction an N-acetyl-L-cysteine-S-conjugate + H2O = an S-substituted L-cysteine + acetate. Functionally, plays an important role in deacetylating mercapturic acids in kidney proximal tubules. Also acts on N-acetyl-aromatic amino acids. This Homo sapiens (Human) protein is N-acyl-aromatic-L-amino acid amidohydrolase (carboxylate-forming) (ACY3).